We begin with the raw amino-acid sequence, 392 residues long: Chaperone protein DnaJ (392 aa).

One can recognise a J domain in the interval 2–67 (DYYTILGVAK…QKRESYDRYG (66 aa)). The CR-type zinc-finger motif lies at 149–227 (GVEKELLVSG…CRGQGRIKDK (79 aa)). Zn(2+)-binding residues include cysteine 162, cysteine 165, cysteine 179, cysteine 182, cysteine 201, cysteine 204, cysteine 215, and cysteine 218. CXXCXGXG motif repeat units lie at residues 162–169 (CDACSGSG), 179–186 (CDRCKGSG), 201–208 (CPDCSGEG), and 215–222 (CSECRGQG).

This sequence belongs to the DnaJ family. In terms of assembly, homodimer. Zn(2+) serves as cofactor.

The protein localises to the cytoplasm. Its function is as follows. Participates actively in the response to hyperosmotic and heat shock by preventing the aggregation of stress-denatured proteins and by disaggregating proteins, also in an autonomous, DnaK-independent fashion. Unfolded proteins bind initially to DnaJ; upon interaction with the DnaJ-bound protein, DnaK hydrolyzes its bound ATP, resulting in the formation of a stable complex. GrpE releases ADP from DnaK; ATP binding to DnaK triggers the release of the substrate protein, thus completing the reaction cycle. Several rounds of ATP-dependent interactions between DnaJ, DnaK and GrpE are required for fully efficient folding. Also involved, together with DnaK and GrpE, in the DNA replication of plasmids through activation of initiation proteins. This chain is Chaperone protein DnaJ, found in Chlamydia muridarum (strain MoPn / Nigg).